The following is a 147-amino-acid chain: Protein archease (147 aa).

Residues D17, D146, and I147 each coordinate Ca(2+).

It belongs to the archease family.

Activates the tRNA-splicing ligase complex by facilitating the enzymatic turnover of catalytic subunit RtcB. Acts by promoting the guanylylation of RtcB, a key intermediate step in tRNA ligation. Can also alter the NTP specificity of RtcB such that ATP, dGTP or ITP is used efficiently. In Pyrobaculum neutrophilum (strain DSM 2338 / JCM 9278 / NBRC 100436 / V24Sta) (Thermoproteus neutrophilus), this protein is Protein archease.